A 241-amino-acid polypeptide reads, in one-letter code: UDP-2,3-diacylglucosamine hydrolase (241 aa).

Positions 9, 11, 42, 79, and 114 each coordinate Mn(2+). Residue 79-80 (NR) coordinates substrate. Substrate is bound by residues aspartate 122, serine 160, asparagine 164, lysine 167, and histidine 195. The Mn(2+) site is built by histidine 195 and histidine 197.

This sequence belongs to the LpxH family. The cofactor is Mn(2+).

The protein localises to the cell inner membrane. The catalysed reaction is UDP-2-N,3-O-bis[(3R)-3-hydroxytetradecanoyl]-alpha-D-glucosamine + H2O = 2-N,3-O-bis[(3R)-3-hydroxytetradecanoyl]-alpha-D-glucosaminyl 1-phosphate + UMP + 2 H(+). The protein operates within glycolipid biosynthesis; lipid IV(A) biosynthesis; lipid IV(A) from (3R)-3-hydroxytetradecanoyl-[acyl-carrier-protein] and UDP-N-acetyl-alpha-D-glucosamine: step 4/6. Hydrolyzes the pyrophosphate bond of UDP-2,3-diacylglucosamine to yield 2,3-diacylglucosamine 1-phosphate (lipid X) and UMP by catalyzing the attack of water at the alpha-P atom. Involved in the biosynthesis of lipid A, a phosphorylated glycolipid that anchors the lipopolysaccharide to the outer membrane of the cell. In Shewanella frigidimarina (strain NCIMB 400), this protein is UDP-2,3-diacylglucosamine hydrolase.